A 94-amino-acid chain; its full sequence is Pyrimidine/purine nucleoside phosphorylase (94 aa).

The protein belongs to the nucleoside phosphorylase PpnP family.

It carries out the reaction a purine D-ribonucleoside + phosphate = a purine nucleobase + alpha-D-ribose 1-phosphate. The enzyme catalyses adenosine + phosphate = alpha-D-ribose 1-phosphate + adenine. It catalyses the reaction cytidine + phosphate = cytosine + alpha-D-ribose 1-phosphate. The catalysed reaction is guanosine + phosphate = alpha-D-ribose 1-phosphate + guanine. It carries out the reaction inosine + phosphate = alpha-D-ribose 1-phosphate + hypoxanthine. The enzyme catalyses thymidine + phosphate = 2-deoxy-alpha-D-ribose 1-phosphate + thymine. It catalyses the reaction uridine + phosphate = alpha-D-ribose 1-phosphate + uracil. The catalysed reaction is xanthosine + phosphate = alpha-D-ribose 1-phosphate + xanthine. Catalyzes the phosphorolysis of diverse nucleosides, yielding D-ribose 1-phosphate and the respective free bases. Can use uridine, adenosine, guanosine, cytidine, thymidine, inosine and xanthosine as substrates. Also catalyzes the reverse reactions. This Teredinibacter turnerae (strain ATCC 39867 / T7901) protein is Pyrimidine/purine nucleoside phosphorylase.